The chain runs to 430 residues: Tol-Pal system protein TolB (430 aa).

The signal sequence occupies residues 1–21 (MKQAFRVALGFFLLWASVLHA).

The protein belongs to the TolB family. The Tol-Pal system is composed of five core proteins: the inner membrane proteins TolA, TolQ and TolR, the periplasmic protein TolB and the outer membrane protein Pal. They form a network linking the inner and outer membranes and the peptidoglycan layer.

The protein resides in the periplasm. Its function is as follows. Part of the Tol-Pal system, which plays a role in outer membrane invagination during cell division and is important for maintaining outer membrane integrity. TolB occupies a key intermediary position in the Tol-Pal system because it communicates directly with both membrane-embedded components, Pal in the outer membrane and TolA in the inner membrane. The polypeptide is Tol-Pal system protein TolB (Sodalis glossinidius (strain morsitans)).